Here is a 304-residue protein sequence, read N- to C-terminus: Xylanase inhibitor protein 1 (304 aa).

Residues 1 to 29 (MVALGRRSWLVPLAMVLAVSSCLAGPAMA) form the signal peptide. A GH18 domain is found at 34–304 (GQMTVFWGRN…GYGKTVKYWA (271 aa)). Cystine bridges form between cysteine 53–cysteine 93 and cysteine 190–cysteine 219.

This sequence belongs to the glycosyl hydrolase 18 family. Xylanase inhibitor subfamily. In terms of assembly, binds to fungal GH11 xylanases. Constitutively expressed in shoots.

Its subcellular location is the secreted. Fungal xylanase inhibitor. Possesses competitive inhibiting activity against fungal endo-1,4-beta-D-xylanases belonging to glycoside hydrolase family 11 (GH11). May function in plant defense against secreted fungal pathogen xylanases. Is similar to class III chitinases, but does not exhibit chitinase activity. This chain is Xylanase inhibitor protein 1, found in Oryza sativa subsp. japonica (Rice).